The primary structure comprises 367 residues: Putative F-box protein At4g10190 (367 aa).

An F-box domain is found at 3-53 (KRNIVDLPEDLVMEILARVPTVTLVRLQSTSKRWNVLIEDKRFAEQHFTNA).

This Arabidopsis thaliana (Mouse-ear cress) protein is Putative F-box protein At4g10190.